We begin with the raw amino-acid sequence, 174 residues long: MARFLVALALFGVVAMTAATGDAPKEWSGKPWLGKFVAEVTDKSENWEAFVDALGLPEQFGRAPVKTIQKIYKQGDHYHHIFALPDKNFEKDIEFTLGQEVEIKQGEHIAKTKYSEDGEKLVADVSIPTKGKTIRSEYEVQGDQLIKTYKTGDIVAKKWFKKVANPTEAPAQAA.

The signal sequence occupies residues 1-19 (MARFLVALALFGVVAMTAA). The interval 26–57 (EWSGKPWLGKFVAEVTDKSENWEAFVDALGLP) is SAHS-c1. Residues 72–100 (YKQGDHYHHIFALPDKNFEKDIEFTLGQE) are SAHS-c2. Positions 113-162 (KYSEDGEKLVADVSIPTKGKTIRSEYEVQGDQLIKTYKTGDIVAKKWFKK) are SAHS-c3.

It belongs to the Secretory-abundant heat soluble protein (SAHS) family.

The protein resides in the secreted. In terms of biological role, secreted heat soluble protein acting as a molecular shield in water-deficient condition. Tardigrade-specific intrinsically disordered proteins (TDPs) are essential for desiccation tolerance by forming non-crystalline amorphous solids upon desiccation, and this vitrified state mirrors their protective capabilities. The sequence is that of Secretory-abundant heat soluble protein 68234 from Hypsibius exemplaris (Freshwater tardigrade).